Consider the following 166-residue polypeptide: Ureidoglycolate lyase (166 aa).

It belongs to the ureidoglycolate lyase family. In terms of assembly, homodimer. Ni(2+) serves as cofactor.

It carries out the reaction (S)-ureidoglycolate = urea + glyoxylate. The protein operates within nitrogen metabolism; (S)-allantoin degradation. Catalyzes the catabolism of the allantoin degradation intermediate (S)-ureidoglycolate, generating urea and glyoxylate. Involved in the utilization of allantoin as nitrogen source. The chain is Ureidoglycolate lyase from Rhizobium leguminosarum bv. trifolii (strain WSM2304).